The chain runs to 239 residues: uncharacterized protein (239 aa).

Helical transmembrane passes span 4-24, 29-49, 61-81, 84-104, 116-136, 139-159, 180-200, and 218-238; these read LIPK…LGMV, VIWH…VYPV, YQKW…ISVF, PPLI…MYFA, VAGV…GMGT, GWAW…SFYV, LLLP…AFIP, and IGIL…LFIT.

To H.influenzae HI_1626.

The protein localises to the cell membrane. This is an uncharacterized protein from Bacillus subtilis (strain 168).